Consider the following 474-residue polypeptide: Sulfide dehydrogenase subunit alpha (474 aa).

Positions 1 to 2 are excised as a propeptide; sequence MP. Residues Cys-42, Cys-45, Cys-52, and Cys-56 each contribute to the [4Fe-4S] cluster site. The [3Fe-4S] cluster site is built by Cys-101, Cys-107, and Cys-111.

Heterodimer of alpha and beta subunits. The cofactor is FAD. It depends on [3Fe-4S] cluster as a cofactor. [4Fe-4S] cluster is required as a cofactor.

It is found in the cytoplasm. It catalyses the reaction n sulfur + hydrogen sulfide + NADP(+) = (n+1) sulfur + NADPH. The enzyme catalyses 2 reduced [2Fe-2S]-[ferredoxin] + NADP(+) + H(+) = 2 oxidized [2Fe-2S]-[ferredoxin] + NADPH. A bifunctional enzyme that catalyzes the reduction of elemental sulfur or polysulfide to hydrogen sulfide with NADPH as electron donor. Also functions as a reduced ferredoxin:NADP oxidoreductase with a very high affinity for reduced ferredoxin. Exhibits a broad specificity for various physiological and non-physiological substrates with varied reduction potentials such as methyl viologen, benzyl viologen, FAD, FMN, methylene blue, 2,6-dichlorophenolindophenol (DCIP), cytochrome C and ferricyanide with highest preference for benzyl viologen. Does not reduce fumarate, succinate, nitrate, nitrite, sulfate, sulfite or protons. Does not possess any hydrogenase activity or NADPH-dependent glutamate synthase activity. The protein is Sulfide dehydrogenase subunit alpha of Pyrococcus furiosus (strain ATCC 43587 / DSM 3638 / JCM 8422 / Vc1).